Here is a 437-residue protein sequence, read N- to C-terminus: ATP-dependent protease ATPase subunit HslU (437 aa).

Residues valine 18, 60-65, aspartate 250, glutamate 315, and arginine 387 each bind ATP; that span reads GCGKTE.

Belongs to the ClpX chaperone family. HslU subfamily. A double ring-shaped homohexamer of HslV is capped on each side by a ring-shaped HslU homohexamer. The assembly of the HslU/HslV complex is dependent on binding of ATP.

It is found in the cytoplasm. In terms of biological role, ATPase subunit of a proteasome-like degradation complex; this subunit has chaperone activity. The binding of ATP and its subsequent hydrolysis by HslU are essential for unfolding of protein substrates subsequently hydrolyzed by HslV. HslU recognizes the N-terminal part of its protein substrates and unfolds these before they are guided to HslV for hydrolysis. The polypeptide is ATP-dependent protease ATPase subunit HslU (Methylorubrum extorquens (strain PA1) (Methylobacterium extorquens)).